The primary structure comprises 155 residues: Transcription antitermination protein NusB (155 aa).

It belongs to the NusB family.

In terms of biological role, involved in transcription antitermination. Required for transcription of ribosomal RNA (rRNA) genes. Binds specifically to the boxA antiterminator sequence of the ribosomal RNA (rrn) operons. In Vibrio campbellii (strain ATCC BAA-1116), this protein is Transcription antitermination protein NusB.